The sequence spans 156 residues: Putative pre-16S rRNA nuclease (156 aa).

The protein belongs to the YqgF nuclease family.

Its subcellular location is the cytoplasm. Functionally, could be a nuclease involved in processing of the 5'-end of pre-16S rRNA. The chain is Putative pre-16S rRNA nuclease from Phenylobacterium zucineum (strain HLK1).